A 240-amino-acid polypeptide reads, in one-letter code: 2-C-methyl-D-erythritol 4-phosphate cytidylyltransferase (240 aa).

It belongs to the IspD/TarI cytidylyltransferase family. IspD subfamily.

It carries out the reaction 2-C-methyl-D-erythritol 4-phosphate + CTP + H(+) = 4-CDP-2-C-methyl-D-erythritol + diphosphate. The protein operates within isoprenoid biosynthesis; isopentenyl diphosphate biosynthesis via DXP pathway; isopentenyl diphosphate from 1-deoxy-D-xylulose 5-phosphate: step 2/6. Catalyzes the formation of 4-diphosphocytidyl-2-C-methyl-D-erythritol from CTP and 2-C-methyl-D-erythritol 4-phosphate (MEP). The protein is 2-C-methyl-D-erythritol 4-phosphate cytidylyltransferase of Chlorobium luteolum (strain DSM 273 / BCRC 81028 / 2530) (Pelodictyon luteolum).